Here is a 251-residue protein sequence, read N- to C-terminus: Triosephosphate isomerase (251 aa).

9 to 11 contributes to the substrate binding site; sequence NWK. His-95 acts as the Electrophile in catalysis. Glu-167 functions as the Proton acceptor in the catalytic mechanism. Substrate-binding positions include Gly-173, Ser-213, and 234-235; that span reads GG.

This sequence belongs to the triosephosphate isomerase family. As to quaternary structure, homodimer.

The protein resides in the cytoplasm. The enzyme catalyses D-glyceraldehyde 3-phosphate = dihydroxyacetone phosphate. Its pathway is carbohydrate biosynthesis; gluconeogenesis. It functions in the pathway carbohydrate degradation; glycolysis; D-glyceraldehyde 3-phosphate from glycerone phosphate: step 1/1. In terms of biological role, involved in the gluconeogenesis. Catalyzes stereospecifically the conversion of dihydroxyacetone phosphate (DHAP) to D-glyceraldehyde-3-phosphate (G3P). The chain is Triosephosphate isomerase from Latilactobacillus sakei subsp. sakei (strain 23K) (Lactobacillus sakei subsp. sakei).